Consider the following 129-residue polypeptide: Glycine cleavage system H protein (129 aa).

The Lipoyl-binding domain maps to 24-106 (SYTVGISEHA…FGDGWFFRVM (83 aa)). Position 65 is an N6-lipoyllysine (Lys-65).

It belongs to the GcvH family. In terms of assembly, the glycine cleavage system is composed of four proteins: P, T, L and H. The cofactor is (R)-lipoate.

In terms of biological role, the glycine cleavage system catalyzes the degradation of glycine. The H protein shuttles the methylamine group of glycine from the P protein to the T protein. In Shewanella woodyi (strain ATCC 51908 / MS32), this protein is Glycine cleavage system H protein.